A 363-amino-acid chain; its full sequence is Pyrimidine monooxygenase RutA (363 aa).

FMN is bound by residues 49–50 (IK), N115, E124, 140–141 (RY), and S190.

It belongs to the NtaA/SnaA/DszA monooxygenase family. RutA subfamily.

The catalysed reaction is uracil + FMNH2 + NADH + O2 = (Z)-3-ureidoacrylate + FMN + NAD(+) + H2O + H(+). It catalyses the reaction thymine + FMNH2 + NADH + O2 = (Z)-2-methylureidoacrylate + FMN + NAD(+) + H2O + H(+). Catalyzes the pyrimidine ring opening between N-3 and C-4 by an unusual flavin hydroperoxide-catalyzed mechanism, adding oxygen atoms in the process to yield ureidoacrylate peracid, that immediately reacts with FMN forming ureidoacrylate and FMN-N(5)-oxide. The FMN-N(5)-oxide reacts spontaneously with NADH to produce FMN. Requires the flavin reductase RutF to regenerate FMN in vivo. The protein is Pyrimidine monooxygenase RutA of Enterobacter sp. (strain 638).